The chain runs to 627 residues: Phosphomethylpyrimidine synthase (627 aa).

Residues 1 to 24 (MSATQKNNITRLEQLDRQSTQPFP) are compositionally biased toward polar residues. The segment at 1 to 29 (MSATQKNNITRLEQLDRQSTQPFPNSRKV) is disordered. Residues N231, M260, Y289, H325, 345 to 347 (SRG), 386 to 389 (DGLR), and E425 each bind substrate. H429 is a binding site for Zn(2+). Position 452 (Y452) interacts with substrate. Position 493 (H493) interacts with Zn(2+). [4Fe-4S] cluster contacts are provided by C573, C576, and C581.

The protein belongs to the ThiC family. In terms of assembly, homodimer. [4Fe-4S] cluster serves as cofactor.

It catalyses the reaction 5-amino-1-(5-phospho-beta-D-ribosyl)imidazole + S-adenosyl-L-methionine = 4-amino-2-methyl-5-(phosphooxymethyl)pyrimidine + CO + 5'-deoxyadenosine + formate + L-methionine + 3 H(+). It participates in cofactor biosynthesis; thiamine diphosphate biosynthesis. Functionally, catalyzes the synthesis of the hydroxymethylpyrimidine phosphate (HMP-P) moiety of thiamine from aminoimidazole ribotide (AIR) in a radical S-adenosyl-L-methionine (SAM)-dependent reaction. This chain is Phosphomethylpyrimidine synthase, found in Pseudomonas paraeruginosa (strain DSM 24068 / PA7) (Pseudomonas aeruginosa (strain PA7)).